Consider the following 84-residue polypeptide: Small ribosomal subunit protein uS17 (84 aa).

This sequence belongs to the universal ribosomal protein uS17 family. In terms of assembly, part of the 30S ribosomal subunit.

One of the primary rRNA binding proteins, it binds specifically to the 5'-end of 16S ribosomal RNA. In Clostridium botulinum (strain Okra / Type B1), this protein is Small ribosomal subunit protein uS17.